A 1165-amino-acid chain; its full sequence is Vacuolar segregation protein 7 (1165 aa).

At 1-919 (MTEEDRKLTV…RKSPFVKVKN (919 aa)) the chain is on the cytoplasmic side. The tract at residues 118–147 (SVSSTNNNSNNALINHNPLSSHLSNPSSSL) is disordered. The residue at position 164 (Ser-164) is a Phosphoserine. Disordered regions lie at residues 215–241 (SNNTAPSTSNNIGSNTPPAPLLPLPSL), 274–423 (KAKN…SEKP), 461–497 (LIFPDSSSQQQQQQQQPPKQQQQQQNHGITSKISAPL), and 560–668 (EPPH…KRPL). The segment covering 216–230 (NNTAPSTSNNIGSNT) has biased composition (polar residues). A compositionally biased stretch (low complexity) spans 334–345 (TTSTKTAPSTAP). Residues 346 to 367 (LGSTDNTQALTASVSSSNADNH) show a composition bias toward polar residues. The segment covering 375–391 (SSNNNGNNSNSASNKTN) has biased composition (low complexity). Polar residues predominate over residues 393–412 (DIKNSNADLSASTSNNNAIN). Basic and acidic residues predominate over residues 413 to 423 (DDSHESNSEKP). 2 stretches are compositionally biased toward low complexity: residues 469–485 (QQQQQQQQPPKQQQQQQ) and 562–571 (PHQLQQQQPP). Residues 576 to 587 (SVDSYTSDNPDS) show a composition bias toward polar residues. The segment covering 599-613 (SLVSLSKVSPHLLSS) has biased composition (low complexity). A compositionally biased stretch (polar residues) spans 614-662 (TSSNGNTISCPNVATNSQELEPNNDISTKKSLSNSTLRHSSANRNSNYG). Residues 920–940 (FLYLAFVISSLLMTGFILGFL) traverse the membrane as a helical; Signal-anchor for type II membrane protein segment. Residues 941–1165 (LATNKELQDV…KDSMVHPGKK (225 aa)) lie on the Vacuolar side of the membrane. Residues Asn-1020 and Asn-1099 are each glycosylated (N-linked (GlcNAc...) asparagine). A disordered region spans residues 1074 to 1121 (SPGSREAKHENDDDDDDDGDDGDDENNTNERQYKSKPNARDDKEDDTK). Acidic residues predominate over residues 1085 to 1100 (DDDDDDDGDDGDDENN). Over residues 1111–1121 (NARDDKEDDTK) the composition is skewed to basic and acidic residues.

Component of the PI(3,5)P2 regulatory complex, composed of ATG18, FIG4, FAB1, VAC14 and VAC7. VAC14 nucleates the assembly of the complex and serves as a scaffold. N-glycosylated.

It localises to the vacuole membrane. Its function is as follows. The PI(3,5)P2 regulatory complex regulates both the synthesis and turnover of phosphatidylinositol 3,5-bisphosphate (PtdIns(3,5)P2). Positively regulates FAB1 kinase activity. Major activator of FAB1 during hyperosmotic shock and can elevate levels of PtdIns(3,5)P2 in the absence of VAC14 and FIG4. Directly involved in vacuolar membrane scission. Required for normal vacuole acidification, inheritance and morphology. This chain is Vacuolar segregation protein 7 (VAC7), found in Saccharomyces cerevisiae (strain ATCC 204508 / S288c) (Baker's yeast).